A 511-amino-acid polypeptide reads, in one-letter code: Lariat debranching enzyme (511 aa).

A divalent metal cation contacts are provided by C52, H54, D83, and N128. The interval 168 to 198 (SGIYSHGDVEFSHYERPAFAERDVKSAYHVR) is lariat recognition loop. Positions 226, 278, and 280 each coordinate a divalent metal cation. Residues 473–511 (EDDFIIDRGHGSEEPEAKKSRLEEEKKKKKKKIENLKTL) form a disordered region. Over residues 477-498 (IIDRGHGSEEPEAKKSRLEEEK) the composition is skewed to basic and acidic residues.

This sequence belongs to the lariat debranching enzyme family. The cofactor is Fe(2+). It depends on Zn(2+) as a cofactor. Requires Mn(2+) as cofactor.

Its subcellular location is the nucleus. Its activity is regulated as follows. Active in presence of diverse metals including Fe(2+), Zn(2+), Mn(2+). Binds two metal cations in two adjacent alpha and beta metal-binding pockets. In terms of biological role, cleaves the 2'-5' phosphodiester linkage at the branch point of lariat intron pre-mRNAs after splicing and converts them into linear molecules that are subsequently degraded. It thereby facilitates ribonucleotide turnover. In Caenorhabditis briggsae, this protein is Lariat debranching enzyme (dbr-1).